A 158-amino-acid chain; its full sequence is Protein Smg homolog (158 aa).

This sequence belongs to the Smg family.

The chain is Protein Smg homolog from Alteromonas mediterranea (strain DSM 17117 / CIP 110805 / LMG 28347 / Deep ecotype).